The sequence spans 465 residues: ATP synthase subunit beta (465 aa).

An ATP-binding site is contributed by 152-159; sequence GGAGVGKT.

Belongs to the ATPase alpha/beta chains family. In terms of assembly, F-type ATPases have 2 components, CF(1) - the catalytic core - and CF(0) - the membrane proton channel. CF(1) has five subunits: alpha(3), beta(3), gamma(1), delta(1), epsilon(1). CF(0) has three main subunits: a(1), b(2) and c(9-12). The alpha and beta chains form an alternating ring which encloses part of the gamma chain. CF(1) is attached to CF(0) by a central stalk formed by the gamma and epsilon chains, while a peripheral stalk is formed by the delta and b chains.

Its subcellular location is the cell inner membrane. The enzyme catalyses ATP + H2O + 4 H(+)(in) = ADP + phosphate + 5 H(+)(out). Its function is as follows. Produces ATP from ADP in the presence of a proton gradient across the membrane. The catalytic sites are hosted primarily by the beta subunits. This is ATP synthase subunit beta from Campylobacter curvus (strain 525.92).